The following is a 320-amino-acid chain: 4-diphosphocytidyl-2-C-methyl-D-erythritol kinase (320 aa).

Lys-26 is a catalytic residue. Residue 111–121 (PVAGGMAGGSA) participates in ATP binding. Residue Asp-153 is part of the active site.

It belongs to the GHMP kinase family. IspE subfamily.

The catalysed reaction is 4-CDP-2-C-methyl-D-erythritol + ATP = 4-CDP-2-C-methyl-D-erythritol 2-phosphate + ADP + H(+). It functions in the pathway isoprenoid biosynthesis; isopentenyl diphosphate biosynthesis via DXP pathway; isopentenyl diphosphate from 1-deoxy-D-xylulose 5-phosphate: step 3/6. Functionally, catalyzes the phosphorylation of the position 2 hydroxy group of 4-diphosphocytidyl-2C-methyl-D-erythritol. This Mycobacterium marinum (strain ATCC BAA-535 / M) protein is 4-diphosphocytidyl-2-C-methyl-D-erythritol kinase.